We begin with the raw amino-acid sequence, 230 residues long: Ion-translocating oxidoreductase complex subunit E (230 aa).

Helical transmembrane passes span 22 to 42 (LLGL…LGLG), 63 to 83 (TPAE…VSAV), 86 to 106 (LINA…PLIV), 125 to 145 (WLSA…MFVL), and 182 to 202 (PFLL…MLAV).

It belongs to the NqrDE/RnfAE family. The complex is composed of six subunits: RsxA, RsxB, RsxC, RsxD, RsxE and RsxG.

The protein localises to the cell inner membrane. Its function is as follows. Part of a membrane-bound complex that couples electron transfer with translocation of ions across the membrane. Required to maintain the reduced state of SoxR. The sequence is that of Ion-translocating oxidoreductase complex subunit E from Salmonella paratyphi A (strain ATCC 9150 / SARB42).